The primary structure comprises 138 residues: Small ribosomal subunit protein uS11c (138 aa).

The segment at 1 to 22 (MTKPIPRIGSRRSGRIGSRKAG) is disordered. A compositionally biased stretch (basic residues) spans 9–22 (GSRRSGRIGSRKAG).

The protein belongs to the universal ribosomal protein uS11 family. In terms of assembly, part of the 30S ribosomal subunit.

It is found in the plastid. Its subcellular location is the chloroplast. This Piper cenocladum (Ant piper) protein is Small ribosomal subunit protein uS11c.